The primary structure comprises 548 residues: Membrane protein insertase YidC (548 aa).

A helical membrane pass occupies residues 6–26 (NLLVIALLFVSFMIWQAWEQD). The interval 28–55 (NPQPQAQQTTQTTTTAAGSAADQGVPAS) is disordered. Residues 30-50 (QPQAQQTTQTTTTAAGSAADQ) are compositionally biased toward low complexity. A run of 4 helical transmembrane segments spans residues 350–370 (FVGNWGFSIIIITFIVRGIMY), 420–440 (LGGCFPLLIQMPIFLALYYML), 458–478 (LSAQDPYYILPILMGVTMFFI), and 499–519 (PVIFTVFFLWFPSGLVLYYIV).

The protein belongs to the OXA1/ALB3/YidC family. Type 1 subfamily. In terms of assembly, interacts with the Sec translocase complex via SecD. Specifically interacts with transmembrane segments of nascent integral membrane proteins during membrane integration.

It localises to the cell inner membrane. Functionally, required for the insertion and/or proper folding and/or complex formation of integral membrane proteins into the membrane. Involved in integration of membrane proteins that insert both dependently and independently of the Sec translocase complex, as well as at least some lipoproteins. Aids folding of multispanning membrane proteins. The protein is Membrane protein insertase YidC of Shigella dysenteriae serotype 1 (strain Sd197).